The sequence spans 265 residues: Transcription factor BHLH089 (265 aa).

A disordered region spans residues 1 to 132; that stretch reads MDPAPTLAAE…PPPPEPPKQD (132 aa). 2 stretches are compositionally biased toward gly residues: residues 17–29 and 44–53; these read LGGGGGGGGGGRG and SRGGGGGGGA. Polar residues predominate over residues 95-105; that stretch reads SKSSGDNSSLR. The segment at 142–155 is basic motif; degenerate; that stretch reads QATDSHSLAERARR. Residues 142 to 192 form the bHLH domain; the sequence is QATDSHSLAERARREKISERMKILQDLVPGCNKVIGKASVLDEIINYIQAL. The interval 156–192 is helix-loop-helix motif; that stretch reads EKISERMKILQDLVPGCNKVIGKASVLDEIINYIQAL.

The protein belongs to the bHLH protein family. Interacts with RSS3.

Its subcellular location is the nucleus. Its function is as follows. Transcription factor that may regulate jasmonate-regulated genes. This is Transcription factor BHLH089 from Oryza sativa subsp. japonica (Rice).